Consider the following 208-residue polypeptide: MGYCSGRCTLIFICGMQLVCVLERQIFDFLGYQWAPILANFVHIIIVILGLFGTIQYRPRYITGYAVWLVLWVTWNVFVICFYLEAGDLSKETDLILTFNISMHRSWWMENGPGCTVTSVTPAPDWAPEDHRYITVSGCLLEYQYIEVAHSSLQIVLALAGFIYACYVVKCITEEEDSFDFIGGFDSYGYQGPQKTSHLQLQPMYMSK.

The next 4 helical transmembrane spans lie at 1-23 (MGYCSGRCTLIFICGMQLVCVLE), 35-55 (APILANFVHIIIVILGLFGTI), 62-82 (ITGYAVWLVLWVTWNVFVICF), and 153-173 (LQIVLALAGFIYACYVVKCIT).

This sequence belongs to the NKAIN family. As to quaternary structure, interacts with ATP1B1. In terms of tissue distribution, expressed in fetal brain. Weakly expressed in adult brain and thymus. Not expressed in any other normal tissue examined.

The protein resides in the cell membrane. This chain is Sodium/potassium-transporting ATPase subunit beta-1-interacting protein 2 (NKAIN2), found in Homo sapiens (Human).